A 64-amino-acid polypeptide reads, in one-letter code: Large ribosomal subunit protein bL33 (64 aa).

A compositionally biased stretch (basic and acidic residues) spans 16-25 (EARTSSEPRR). The interval 16–39 (EARTSSEPRRSNGISRYTTEKNKR) is disordered.

The protein belongs to the bacterial ribosomal protein bL33 family.

The chain is Large ribosomal subunit protein bL33 from Prochlorococcus marinus (strain MIT 9515).